A 129-amino-acid polypeptide reads, in one-letter code: Small ribosomal subunit protein uS11 (129 aa).

The protein belongs to the universal ribosomal protein uS11 family. In terms of assembly, part of the 30S ribosomal subunit. Interacts with proteins S7 and S18. Binds to IF-3.

In terms of biological role, located on the platform of the 30S subunit, it bridges several disparate RNA helices of the 16S rRNA. Forms part of the Shine-Dalgarno cleft in the 70S ribosome. The protein is Small ribosomal subunit protein uS11 of Glaesserella parasuis serovar 5 (strain SH0165) (Haemophilus parasuis).